Reading from the N-terminus, the 196-residue chain is Neuropeptide prohormone-4 (196 aa).

A signal peptide spans 1–25 (MSSPLRMDVTFLLAAIAVTWVCGLK). The 41-residue stretch at 50–90 (DCDIASPFKCEESPTCLRLFQVCNGRWDCEHGSDEDNALCA) folds into the LDL-receptor class A domain. 3 cysteine pairs are disulfide-bonded: Cys-51-Cys-65, Cys-59-Cys-78, and Cys-72-Cys-89.

In terms of tissue distribution, expressed by the venom duct.

Its subcellular location is the secreted. This Conus victoriae (Queen Victoria cone) protein is Neuropeptide prohormone-4.